The chain runs to 491 residues: MGETTVEVRKVKNYINGKWIESSTSLYEDVVNPATKEVICQVPLSTKADVEYAVEAAKTAFAKWSKVAVPRRARILFNYQQLLQRDKEELARLITIENGKNLTEARGEVQRGIENVEFAAGAPSLMMGDSLPMIATDVEASNYRYPIGVVGGIAPFNFPMMVPCWMFPMAIALGNAFLLKPSERTPLLTEKLADLLTEAGVPDGVFNVVYGAHDVVNGMLEHPDIKAISFVGSKPVGEYVYKKASENLKRVQALTGAKNHTIVLNDADLDDAVTNIAGAAFGSAGERCMACAVVTVEEGIADAFVAKLKAKAESLVMGNGLDDGVFLGPVIREENKNRTIAYIEKGVEEGATLVCDGRSRVSADGYFIGPTIFENVTTDMTIWKDEIFAPVLSIIRVKNLDEGIQIANRSEFANGACLFTTNAAAVRYFRENIDAGMLGINLGVPAPMAFFPFSGWKSSFYGTLHANGKDSVDFYTRKKVVTARYPKPSFD.

7 residues coordinate NAD(+): Ala154, Phe156, Lys180, Glu183, Arg184, Ser233, and Thr255. Cys288 serves as the catalytic Nucleophile. Glu386 contributes to the NAD(+) binding site.

Belongs to the aldehyde dehydrogenase family. IolA subfamily. In terms of assembly, homotetramer.

It catalyses the reaction 3-oxopropanoate + NAD(+) + CoA + H2O = hydrogencarbonate + acetyl-CoA + NADH + H(+). It carries out the reaction 2-methyl-3-oxopropanoate + NAD(+) + CoA + H2O = propanoyl-CoA + hydrogencarbonate + NADH + H(+). It functions in the pathway polyol metabolism; myo-inositol degradation into acetyl-CoA; acetyl-CoA from myo-inositol: step 7/7. Its function is as follows. Catalyzes the oxidation of malonate semialdehyde (MSA) and methylmalonate semialdehyde (MMSA) into acetyl-CoA and propanoyl-CoA, respectively. Is involved in a myo-inositol catabolic pathway. Bicarbonate, and not CO2, is the end-product of the enzymatic reaction. The sequence is that of Malonate-semialdehyde dehydrogenase 1 from Shouchella clausii (strain KSM-K16) (Alkalihalobacillus clausii).